The chain runs to 248 residues: Probable transcriptional regulatory protein OCAR_7305/OCA5_c08120 (248 aa).

Belongs to the TACO1 family.

It is found in the cytoplasm. The polypeptide is Probable transcriptional regulatory protein OCAR_7305/OCA5_c08120 (Afipia carboxidovorans (strain ATCC 49405 / DSM 1227 / KCTC 32145 / OM5) (Oligotropha carboxidovorans)).